The chain runs to 680 residues: Oligopeptidase A (680 aa).

Histidine 469 provides a ligand contact to Zn(2+). Residue glutamate 470 is part of the active site. Zn(2+) is bound by residues histidine 473 and histidine 476.

It belongs to the peptidase M3 family. Requires Zn(2+) as cofactor.

The enzyme catalyses Hydrolysis of oligopeptides, with broad specificity. Gly or Ala commonly occur as P1 or P1' residues, but more distant residues are also important, as is shown by the fact that Z-Gly-Pro-Gly-|-Gly-Pro-Ala is cleaved, but not Z-(Gly)(5).. Functionally, may play a specific role in the degradation of signal peptides after they are released from precursor forms of secreted proteins. Can cleave N-acetyl-L-Ala(4). This Escherichia coli (strain K12) protein is Oligopeptidase A (prlC).